The sequence spans 599 residues: Sulfite reductase [NADPH] flavoprotein alpha-component (599 aa).

The 139-residue stretch at 63-201 (ITVISASQTG…LATAWRKQVV (139 aa)) folds into the Flavodoxin-like domain. FMN is bound by residues 69–74 (SQTGNA), 116–119 (STQG), and 152–161 (LGDTSYENFC). An FAD-binding FR-type domain is found at 234–448 (EQPLTAQLAV…IEHNDNFRLP (215 aa)). FAD-binding positions include threonine 322, histidine 356, 386–389 (RLYS), 404–406 (TVG), tyrosine 410, and 419–422 (GGAS). NADP(+) is bound by residues 519–520 (SR), 525–529 (KVYVQ), and aspartate 561. Tyrosine 599 contacts FAD.

The protein belongs to the NADPH-dependent sulphite reductase flavoprotein subunit CysJ family. It in the N-terminal section; belongs to the flavodoxin family. In the C-terminal section; belongs to the flavoprotein pyridine nucleotide cytochrome reductase family. In terms of assembly, alpha(8)-beta(8). The alpha component is a flavoprotein, the beta component is a hemoprotein. It depends on FAD as a cofactor. FMN is required as a cofactor.

It carries out the reaction hydrogen sulfide + 3 NADP(+) + 3 H2O = sulfite + 3 NADPH + 4 H(+). It participates in sulfur metabolism; hydrogen sulfide biosynthesis; hydrogen sulfide from sulfite (NADPH route): step 1/1. Its function is as follows. Component of the sulfite reductase complex that catalyzes the 6-electron reduction of sulfite to sulfide. This is one of several activities required for the biosynthesis of L-cysteine from sulfate. The flavoprotein component catalyzes the electron flow from NADPH -&gt; FAD -&gt; FMN to the hemoprotein component. This Serratia proteamaculans (strain 568) protein is Sulfite reductase [NADPH] flavoprotein alpha-component.